Consider the following 244-residue polypeptide: Lymphotoxin-beta (244 aa).

Residues 1–18 (MGALGLEGRGGRLQGRGS) lie on the Cytoplasmic side of the membrane. A helical; Signal-anchor for type II membrane protein transmembrane segment spans residues 19-48 (LLLAVAGATSLVTLLLAVPITVLAVLALVP). Topologically, residues 49–244 (QDQGGLVTET…KTFFGAVMVG (196 aa)) are extracellular. Residues 88 to 243 (PAAHLIGAPL…GKTFFGAVMV (156 aa)) enclose the THD domain. The N-linked (GlcNAc...) asparagine glycan is linked to Asn222.

It belongs to the tumor necrosis factor family. In terms of assembly, heterotrimer of either two LTB and one LTA subunits or (less prevalent) two LTA and one LTB subunits.

It is found in the membrane. Cytokine that binds to LTBR/TNFRSF3. May play a specific role in immune response regulation. Provides the membrane anchor for the attachment of the heterotrimeric complex to the cell surface. The polypeptide is Lymphotoxin-beta (LTB) (Pan troglodytes (Chimpanzee)).